An 82-amino-acid chain; its full sequence is Polyketide biosynthesis acyl-carrier-protein AcpK (82 aa).

In terms of domain architecture, Carrier spans 4–79 (QRIFEVLITN…ELAEVLYDKV (76 aa)). Serine 39 carries the post-translational modification O-(pantetheine 4'-phosphoryl)serine.

4'-phosphopantetheine is transferred from CoA to a specific serine of apo-ACP by sfp.

The protein localises to the cytoplasm. The protein operates within antibiotic biosynthesis; bacillaene biosynthesis. Involved in some intermediate steps for the synthesis of the antibiotic polyketide bacillaene which is involved in secondary metabolism. This chain is Polyketide biosynthesis acyl-carrier-protein AcpK (acpK), found in Bacillus subtilis (strain 168).